The chain runs to 344 residues: Uroporphyrinogen decarboxylase (344 aa).

Substrate is bound by residues Arg-23–Arg-27, Asp-73, Tyr-149, Thr-204, and His-321.

This sequence belongs to the uroporphyrinogen decarboxylase family. In terms of assembly, homodimer.

The protein resides in the cytoplasm. It catalyses the reaction uroporphyrinogen III + 4 H(+) = coproporphyrinogen III + 4 CO2. Its pathway is porphyrin-containing compound metabolism; protoporphyrin-IX biosynthesis; coproporphyrinogen-III from 5-aminolevulinate: step 4/4. In terms of biological role, catalyzes the decarboxylation of four acetate groups of uroporphyrinogen-III to yield coproporphyrinogen-III. The chain is Uroporphyrinogen decarboxylase from Francisella tularensis subsp. tularensis (strain FSC 198).